The chain runs to 127 residues: Photosystem II reaction center Psb28 protein (127 aa).

The tract at residues 108-127 is disordered; the sequence is LGYSQSQDSDQTEGADNQQA. A compositionally biased stretch (polar residues) spans 109 to 127; that stretch reads GYSQSQDSDQTEGADNQQA.

The protein belongs to the Psb28 family. As to quaternary structure, part of the photosystem II complex.

It is found in the cellular thylakoid membrane. This is Photosystem II reaction center Psb28 protein from Synechococcus sp. (strain CC9605).